A 508-amino-acid polypeptide reads, in one-letter code: UTP--glucose-1-phosphate uridylyltransferase (508 aa).

An N-acetylserine modification is found at serine 2. Phosphoserine is present on residues serine 2 and serine 13. UTP is bound by residues 113 to 116 (LNGG), lysine 127, glutamine 190, and glycine 222. 115-116 (GG) serves as a coordination point for substrate. Residue lysine 127 coordinates Mg(2+). Substrate-binding positions include histidine 223, 251–253 (NID), and asparagine 330. Residue aspartate 253 coordinates UTP. Aspartate 253 contributes to the Mg(2+) binding site. Lysine 396 is a binding site for UTP. Lysine 396 is a catalytic residue. Threonine 426 carries the phosphothreonine modification. Serine 434 carries the phosphoserine modification. The residue at position 438 (lysine 438) is an N6-acetyllysine. Residues serine 448 and serine 461 each carry the phosphoserine modification. An oligomerization region spans residues 457–508 (HLTVSGDVTFGKNVSLKGTVIIIANHGDRIDIPPGAVLENKIVSGNLRILDH). Residues 502–503 (NL) are critical for end-to-end subunit interaction.

Belongs to the UDPGP type 1 family. In terms of assembly, homooctamer. As to expression, highly expressed in various brain regions. Expressed in amygdala, anterior cingulate cortex, caudate, cerebellar hemisphere, cerebellum, cortex, frontal cortex, hippocampus, hypothalamus, nucleus accumbens, putamen, spinal cord and substantia nigra. Also widely expressed among other tissues, including liver, heart, placenta, lung, kidney, pancreas and skeletal muscle.

The protein resides in the cytoplasm. It carries out the reaction alpha-D-glucose 1-phosphate + UTP + H(+) = UDP-alpha-D-glucose + diphosphate. It functions in the pathway glycan biosynthesis; glycogen biosynthesis. In terms of biological role, UTP--glucose-1-phosphate uridylyltransferase catalyzing the conversion of glucose-1-phosphate into UDP-glucose, a crucial precursor for the production of glycogen. This chain is UTP--glucose-1-phosphate uridylyltransferase, found in Homo sapiens (Human).